The chain runs to 2215 residues: Unconventional myosin-VIIa (2215 aa).

One can recognise a Myosin motor domain in the interval 65 to 741 (HGVEDMIRLG…HDMLLEVERD (677 aa)). 158-165 (GESGAGKT) contacts ATP. An actin-binding region spans residues 632-639 (FVRCIKPN). IQ domains lie at 745–765 (TDRVILLQKVIRGFKDRSNFL), 768–788 (KSAATLIQRHWRGHHCRKNYE), 791–811 (RLGFLRLQALHRSRKLHKQYR), 814–834 (RQRIIEFQARCRAYLVRKAFR), and 837–857 (LWAVITVQAYARGMIARRLHR). The tract at residues 858–935 (RLRVEYQRRL…LEQMEKARHE (78 aa)) is SAH. A MyTH4 1 domain is found at 1017–1253 (YTRRPLKQPL…PSWLELQATK (237 aa)). In terms of domain architecture, FERM 1 spans 1258 to 1602 (IMLPVTFMDG…LVVTFLEGLR (345 aa)). T1563 is subject to Phosphothreonine. Residue S1569 is modified to Phosphoserine. T1571 carries the phosphothreonine modification. An SH3 domain is found at 1603 to 1672 (KRSKYVVALQ…PTDCVYVMPT (70 aa)). Residues 1747–1896 (HTREPLKQAL…PHLVEVEAIQ (150 aa)) form the MyTH4 2 domain. One can recognise an FERM 2 domain in the interval 1902–2205 (IFHKVYFPDD…SYISQMLTAM (304 aa)).

Belongs to the TRAFAC class myosin-kinesin ATPase superfamily. Myosin family. Might homodimerize in a two headed molecule through the formation of a coiled-coil rod. Identified in a complex with USH1C and USH1G. Interacts with MYRIP. Interacts with RPE65. Interacts with CIB2. May interact with CALM. Interacts with WHRN. Interacts with PLEKHB1 (via PH domain). Interacts with PCDH15. Interacts with TWF2. Interacts with USH1G. Interacts with MYH9. Interacts (via MyTH4-FERM domains) with cytoplasmic regions of ADGRV1 and USH2A. Interacts with PDZD7 (via MyTH4-FERM domains). Interacts with CALML4. As to expression, detected in mechanosensory stereocilia of cochlea hair cells (at protein level). Expressed in the retina, cochlea, kidney and liver.

It is found in the cytoplasm. The protein resides in the cell cortex. The protein localises to the cytoskeleton. Its subcellular location is the synapse. Myosins are actin-based motor molecules with ATPase activity. Unconventional myosins serve in intracellular movements. Their highly divergent tails bind to membranous compartments, which are then moved relative to actin filaments. In the retina, plays an important role in the renewal of the outer photoreceptor disks. Plays an important role in the distribution and migration of retinal pigment epithelial (RPE) melanosomes and phagosomes, and in the regulation of opsin transport in retinal photoreceptors. Mediates intracellular transport of RPE65 in the retina pigment epithelium. In the inner ear, plays an important role in differentiation, morphogenesis and organization of cochlear hair cell bundles. Motor protein that is a part of the functional network formed by USH1C, USH1G, CDH23 and MYO7A that mediates mechanotransduction in cochlear hair cells. Required for normal hearing. Involved in hair-cell vesicle trafficking of aminoglycosides, which are known to induce ototoxicity. The protein is Unconventional myosin-VIIa (Myo7a) of Mus musculus (Mouse).